Consider the following 30-residue polypeptide: SIPCGESCVYIPCITTIVGCSCKDKVCYKN.

Positions 1 to 30 (SIPCGESCVYIPCITTIVGCSCKDKVCYKN) form a cross-link, cyclopeptide (Ser-Asn). 3 cysteine pairs are disulfide-bonded: Cys4–Cys20, Cys8–Cys22, and Cys13–Cys27.

Contains 3 disulfide bonds. In terms of processing, this is a cyclic peptide. Expressed in pod but not in flower, stem, shoot, leaf, seed, root and nodule (at protein level).

Functionally, probably participates in a plant defense mechanism. This is Cliotide T6 from Clitoria ternatea (Butterfly pea).